We begin with the raw amino-acid sequence, 438 residues long: Glutamine synthetase (438 aa).

The region spanning Glu-14–Thr-98 is the GS beta-grasp domain. The 333-residue stretch at Pro-106 to Gln-438 folds into the GS catalytic domain. Positions 130 and 132 each coordinate Mg(2+). Asp-208 provides a ligand contact to ATP. Positions 213 and 220 each coordinate Mg(2+). L-glutamate-binding positions include Asn-264–Gly-265 and Gly-265. Mg(2+) is bound at residue His-269. ATP is bound by residues Asn-271–Ser-273 and Ser-273. L-glutamate-binding residues include Arg-321, Glu-327, and Arg-339. Residues Arg-339, Arg-344, and Lys-352 each coordinate ATP. Glu-357 serves as a coordination point for Mg(2+). Position 359 (Arg-359) interacts with L-glutamate. Tyr-397 carries the O-AMP-tyrosine modification.

The protein belongs to the glutamine synthetase family. Oligomer of 12 subunits arranged in the form of two hexameric ring. It depends on Mg(2+) as a cofactor.

The protein localises to the cytoplasm. It carries out the reaction L-glutamate + NH4(+) + ATP = L-glutamine + ADP + phosphate + H(+). Its activity is regulated as follows. The activity of this enzyme could be controlled by adenylation under conditions of abundant glutamine. In terms of biological role, catalyzes the ATP-dependent biosynthesis of glutamine from glutamate and ammonia. This chain is Glutamine synthetase, found in Rhodobacter capsulatus (Rhodopseudomonas capsulata).